The primary structure comprises 92 residues: Acylphosphatase (92 aa).

Residues Cys-5 and Cys-49 are joined by a disulfide bond. Residues 5-92 (CIIAWVYGRV…SGELTDFRIR (88 aa)) enclose the Acylphosphatase-like domain. Residues Arg-20 and Asn-38 contribute to the active site.

It belongs to the acylphosphatase family.

The catalysed reaction is an acyl phosphate + H2O = a carboxylate + phosphate + H(+). This is Acylphosphatase from Escherichia coli O6:H1 (strain CFT073 / ATCC 700928 / UPEC).